Consider the following 118-residue polypeptide: Large ribosomal subunit protein bL20 (118 aa).

Belongs to the bacterial ribosomal protein bL20 family.

In terms of biological role, binds directly to 23S ribosomal RNA and is necessary for the in vitro assembly process of the 50S ribosomal subunit. It is not involved in the protein synthesizing functions of that subunit. This is Large ribosomal subunit protein bL20 from Lactobacillus acidophilus (strain ATCC 700396 / NCK56 / N2 / NCFM).